The following is a 151-amino-acid chain: Group 10 secretory phospholipase A2 (151 aa).

Residues 1 to 17 (MLLLLLLLLLGPGSCLS) form the signal peptide. Residues 18–28 (EATRRSHVYKR) constitute a propeptide that is removed on maturation. Disulfide bonds link Cys-39-Cys-97, Cys-53-Cys-143, Cys-55-Cys-71, Cys-70-Cys-125, Cys-76-Cys-150, Cys-77-Cys-118, Cys-86-Cys-111, and Cys-104-Cys-116. Ca(2+) contacts are provided by Tyr-54, Gly-56, and Gly-58. His-74 is an active-site residue. Asp-75 contributes to the Ca(2+) binding site. Asp-119 is an active-site residue.

Belongs to the phospholipase A2 family. Interacts with PLA2R1; this interaction mediates PLA2G10 clearance and inactivation. Ca(2+) is required as a cofactor.

It localises to the secreted. Its subcellular location is the lysosome. The protein resides in the cytoplasmic vesicle. The protein localises to the secretory vesicle. It is found in the acrosome. The catalysed reaction is a 1,2-diacyl-sn-glycero-3-phosphocholine + H2O = a 1-acyl-sn-glycero-3-phosphocholine + a fatty acid + H(+). The enzyme catalyses 1-hexadecanoyl-2-(9Z-octadecenoyl)-sn-glycero-3-phosphocholine + H2O = 1-hexadecanoyl-sn-glycero-3-phosphocholine + (9Z)-octadecenoate + H(+). It carries out the reaction 1-octadecanoyl-2-(5Z,8Z,11Z,14Z-eicosatetraenoyl)-sn-glycero-3-phosphocholine + H2O = 1-octadecanoyl-sn-glycero-3-phosphocholine + (5Z,8Z,11Z,14Z)-eicosatetraenoate + H(+). It catalyses the reaction 1,2-dihexadecanoyl-sn-glycero-3-phosphocholine + H2O = 1-hexadecanoyl-sn-glycero-3-phosphocholine + hexadecanoate + H(+). The catalysed reaction is 1-hexadecanoyl-2-(9Z-octadecenoyl)-sn-glycero-3-phosphoglycerol + H2O = 1-hexadecanoyl-sn-glycero-3-phosphoglycerol + (9Z)-octadecenoate + H(+). The enzyme catalyses 1,2-dihexadecanoyl-sn-glycero-3-phospho-(1'-sn-glycerol) + H2O = 1-hexadecanoyl-sn-glycero-3-phospho-(1'-sn-glycerol) + hexadecanoate + H(+). It carries out the reaction 1-hexadecanoyl-2-(9Z-octadecenoyl)-sn-glycero-3-phospho-L-serine + H2O = 1-hexadecanoyl-sn-glycero-3-phospho-L-serine + (9Z)-octadecenoate + H(+). It catalyses the reaction 1-hexadecanoyl-2-(9Z,12Z-octadecadienoyl)-sn-glycero-3-phosphoethanolamine + H2O = 1-hexadecanoyl-sn-glycero-3-phosphoethanolamine + (9Z,12Z)-octadecadienoate + H(+). The catalysed reaction is 1-hexadecanoyl-2-(9Z-octadecenoyl)-sn-glycero-3-phosphate + H2O = 1-hexadecanoyl-sn-glycero-3-phosphate + (9Z)-octadecenoate + H(+). The enzyme catalyses 1-O-hexadecyl-2-acetyl-sn-glycero-3-phosphocholine + H2O = 1-O-hexadecyl-sn-glycero-3-phosphocholine + acetate + H(+). In terms of biological role, secretory calcium-dependent phospholipase A2 that primarily targets extracellular phospholipids. Hydrolyzes the ester bond of the fatty acyl group attached at sn-2 position of phospholipids with preference for phosphatidylcholines and phosphatidylglycerols over phosphatidylethanolamines. Preferentially releases sn-2 omega-6 and omega-3 polyunsaturated fatty acyl (PUFA) chains over saturated fatty acyls. Contributes to phospholipid remodeling of very low-density lipoprotein (VLDL), low-density lipoprotein (LDL) and high-density lipoprotein (HDL) particles. Hydrolyzes LDL phospholipids releasing unsaturated fatty acids that regulate macrophage differentiation toward foam cells. Efficiently hydrolyzes and inactivates platelet activating factor (PAF), a potent lipid mediator present in oxidized LDL. May act in an autocrine and paracrine manner. Secreted by lung epithelium, targets membrane phospholipids of infiltrating eosinophils, releasing arachidonate and boosting eicosanoid and cysteinyl leukotriene synthesis involved in airway inflammatory response. Secreted by gut epithelium, hydrolyzes dietary and biliary phosphatidylcholines in the gastrointestinal lumen. Plays a stem cell regulator role in colon epithelium. Within intracellular compartment, mediates Paneth-like cell differentiation and its stem cell supporting functions by inhibiting the Wnt signaling pathway in intestinal stem cell (ISC). Secreted in the intestinal lumen upon inflammation, acts in an autocrine way and promotes prostaglandin E2 synthesis that stimulates Wnt signaling pathway in ISCs and tissue regeneration. May participate in hair follicle morphogenesis by regulating phosphatidylethanolamines metabolism at the outermost epithelial layer and facilitating melanin synthesis. By releasing lysophosphatidylcholines (LPCs) at sperm acrosome, controls sperm cell capacitation, acrosome reaction and overall fertility. May promote neurite outgrowth in neuron fibers involved in nociception. Contributes to lipid remodeling of cellular membranes and generation of lipid mediators involved in pathogen clearance. Cleaves sn-2 fatty acyl chains of phosphatidylglycerols and phosphatidylethanolamines, which are major components of membrane phospholipids in bacteria. Displays bactericidal activity against Gram-positive bacteria by directly hydrolyzing phospholipids of the bacterial membrane. In pulmonary epithelium, may contribute to host defense response against adenoviral infection. Prevents adenovirus entry into host cells by hydrolyzing host cell plasma membrane, releasing C16:0 LPCs that inhibit virus-mediated membrane fusion and viral infection. Likely prevents adenoviral entry into the endosomes of host cells. May play a role in maturation and activation of innate immune cells including macrophages, group 2 innate lymphoid cells and mast cells. The protein is Group 10 secretory phospholipase A2 (Pla2g10) of Rattus norvegicus (Rat).